The sequence spans 450 residues: Solute carrier family 52, riboflavin transporter, member 2 (450 aa).

A run of 5 helical transmembrane segments spans residues 14–34 (LLVALFGMGSWIAVNGIWVEL), 47–67 (LPSYLSVLVALGNLGLLLVTL), 79–99 (IPIQVVQGLSIVGTGLLAPLW), 114–136 (FLTLAFVLALSCCASNVTFLPFL), and 147–167 (FFLGQGLSALLPCVLALAQGV). Residue Asn178 is glycosylated (N-linked (GlcNAc...) asparagine). Residues 201-221 (FFWVLTALLGTSAAAFQGLLL) traverse the membrane as a helical segment. Residues 230–268 (ATMGTGLRVETPGTEEEEEEEEASPLQEPPGQVASIVSS) are disordered. Acidic residues predominate over residues 242–252 (GTEEEEEEEEA). The next 5 membrane-spanning stretches (helical) occupy residues 282-302 (ACLLGLLAITNALTNGVLPAV), 317-337 (LAVVLGSSANPLACFLAMAVL), 344-364 (LYGLCLLGMFFGTYLMTLAVL), 371-391 (VGTSAGVVLVVLSWVLCAGVF), and 409-429 (ALLAAGVAIQVGSLLGAIAMF).

It belongs to the riboflavin transporter family. As to expression, highly expressed in the placenta and small intestine, moderately in the kidney, colon, lung, prostate, uterus, and thymus, and weakly in all other tissues.

It localises to the cell membrane. The enzyme catalyses riboflavin(in) = riboflavin(out). Its activity is regulated as follows. Riboflavin transport is Na(+)-independent but moderately pH-sensitive. Activity is strongly inhibited by riboflavin analogs, such as lumiflavin. Weakly inhibited by flavin adenine dinucleotide (FAD) and flavin mononucleotide (FMN). Plasma membrane transporter mediating the uptake by cells of the water soluble vitamin B2/riboflavin that plays a key role in biochemical oxidation-reduction reactions of the carbohydrate, lipid, and amino acid metabolism. May also act as a receptor for 4-hydroxybutyrate. The polypeptide is Solute carrier family 52, riboflavin transporter, member 2 (Slc52a2) (Rattus norvegicus (Rat)).